Reading from the N-terminus, the 293-residue chain is ELMO domain-containing protein 2 (293 aa).

One can recognise an ELMO domain in the interval Gln126–Leu282.

In terms of biological role, acts as a GTPase-activating protein (GAP) toward guanine nucleotide exchange factors like ARL2, ARL3, ARF1 and ARF6, but not for GTPases outside the Arf family. The chain is ELMO domain-containing protein 2 (ELMOD2) from Bos taurus (Bovine).